The following is a 41-amino-acid chain: Photosystem I reaction center subunit IX (41 aa).

A helical membrane pass occupies residues 7–27 (YLSTAPVITAIWLGITAGILI).

The protein belongs to the PsaJ family.

It is found in the cellular thylakoid membrane. In terms of biological role, may help in the organization of the PsaE and PsaF subunits. This is Photosystem I reaction center subunit IX from Cyanothece sp. (strain PCC 7425 / ATCC 29141).